Reading from the N-terminus, the 616-residue chain is Dihydroxy-acid dehydratase (616 aa).

Aspartate 81 serves as a coordination point for Mg(2+). Residue cysteine 122 participates in [2Fe-2S] cluster binding. Residues aspartate 123 and lysine 124 each contribute to the Mg(2+) site. Lysine 124 carries the post-translational modification N6-carboxylysine. Cysteine 195 is a binding site for [2Fe-2S] cluster. Glutamate 491 provides a ligand contact to Mg(2+). Catalysis depends on serine 517, which acts as the Proton acceptor.

The protein belongs to the IlvD/Edd family. Homodimer. [2Fe-2S] cluster is required as a cofactor. The cofactor is Mg(2+).

The enzyme catalyses (2R)-2,3-dihydroxy-3-methylbutanoate = 3-methyl-2-oxobutanoate + H2O. It carries out the reaction (2R,3R)-2,3-dihydroxy-3-methylpentanoate = (S)-3-methyl-2-oxopentanoate + H2O. It participates in amino-acid biosynthesis; L-isoleucine biosynthesis; L-isoleucine from 2-oxobutanoate: step 3/4. Its pathway is amino-acid biosynthesis; L-valine biosynthesis; L-valine from pyruvate: step 3/4. In terms of biological role, functions in the biosynthesis of branched-chain amino acids. Catalyzes the dehydration of (2R,3R)-2,3-dihydroxy-3-methylpentanoate (2,3-dihydroxy-3-methylvalerate) into 2-oxo-3-methylpentanoate (2-oxo-3-methylvalerate) and of (2R)-2,3-dihydroxy-3-methylbutanoate (2,3-dihydroxyisovalerate) into 2-oxo-3-methylbutanoate (2-oxoisovalerate), the penultimate precursor to L-isoleucine and L-valine, respectively. The chain is Dihydroxy-acid dehydratase from Klebsiella pneumoniae subsp. pneumoniae (strain ATCC 700721 / MGH 78578).